Reading from the N-terminus, the 146-residue chain is Hemoglobin cathodic subunit beta (146 aa).

One can recognise a Globin domain in the interval 2-146 (QWSSSERSTI…VVSALSRQYF (145 aa)). Heme b-binding residues include histidine 63 and histidine 92.

The protein belongs to the globin family. Heterotetramer of two alpha chains and two beta chains. As to expression, red blood cells.

In terms of biological role, involved in oxygen transport from the gills to the various peripheral tissues. This is Hemoglobin cathodic subunit beta from Conger conger (Conger eel).